We begin with the raw amino-acid sequence, 1848 residues long: Histone-lysine N-methyltransferase, H3 lysine-79 specific (1848 aa).

Residues 19 to 336 enclose the DOT1 domain; it reads DVISFAWPLQ…ILERYFQRLK (318 aa). S-adenosyl-L-methionine contacts are provided by residues 142–145, 165–174, Glu192, and 228–229; these read YGET, FIDLGSGVGQ, and DF. Disordered stretches follow at residues 338–537, 558–593, 886–908, 960–996, 1033–1075, 1165–1190, 1221–1333, 1345–1374, 1432–1463, 1486–1508, 1529–1559, 1573–1604, 1637–1713, and 1731–1757; these read KGGN…TRKA, AVSV…ARGR, LNSV…WPEV, PPPA…QMTL, LNED…AQSL, HMAS…RSSV, QRQQ…TQVS, QEKL…KTIG, VHVR…GGAA, ARAN…GRDY, EQQQ…PPLE, KYKE…LPTH, SPLA…VDPP, and QLSH…LQLT. The span at 339-360 shows a compositional bias: basic and acidic residues; sequence GGNDHESVGTVRTTRDRAKREA. A compositionally biased stretch (basic residues) spans 364 to 373; the sequence is QHHHNNHHSN. A compositionally biased stretch (low complexity) spans 391–405; sequence ATATAAHQQRHQSQS. The segment covering 419–428 has biased composition (polar residues); the sequence is SGQQAASKTR. Low complexity-rich tracts occupy residues 429–439 and 453–474; these read QQLQHQHNQQQ and DATN…ASNG. A phosphoserine mark is found at Ser491, Ser492, and Ser494. Gly residues predominate over residues 507–518; sequence GSNGGSIGGGSV. Basic residues-rich tracts occupy residues 526 to 535 and 582 to 593; these read TQKKRKKLTR and RKGRMKKGARGR. Positions 1221–1235 are enriched in low complexity; it reads QRQQMRVEEQQQQQQ. The span at 1236–1263 shows a compositional bias: basic residues; it reads HQHHHHHHHHHPQHRLPQHVQHQHPHQH. Positions 1289-1300 are enriched in low complexity; the sequence is EPPQTQPLELLP. A phosphoserine mark is found at Ser1318, Ser1324, and Ser1325. Positions 1532-1545 are enriched in low complexity; it reads QKQSKGAGSAGSSS. A compositionally biased stretch (basic and acidic residues) spans 1574 to 1583; that stretch reads YKEETEERQR. Low complexity-rich tracts occupy residues 1585–1598 and 1681–1696; these read AAAA…PPAG and HDAT…SSSS. The segment covering 1697-1706 has biased composition (polar residues); it reads CGRRSNSNNG.

Belongs to the class I-like SAM-binding methyltransferase superfamily. DOT1 family. As to expression, broadly expressed in most tissues. Expressed in a large subset of neurons and in a small subset of glial cells.

The protein localises to the nucleus. The catalysed reaction is L-lysyl(79)-[histone H3] + 3 S-adenosyl-L-methionine = N(6),N(6),N(6)-trimethyl-L-lysyl(79)-[histone H3] + 3 S-adenosyl-L-homocysteine + 3 H(+). Functionally, histone methyltransferase. Methylates 'Lys-79' of histone H3. Required for Polycomb Group (PcG) and trithorax Group (trxG) maintenance of expression. Also involved in telomeric silencing but do not in centric heterochromatin. Probably participates in pairing sensitivity. The sequence is that of Histone-lysine N-methyltransferase, H3 lysine-79 specific (gpp) from Drosophila melanogaster (Fruit fly).